The following is a 108-amino-acid chain: Ig kappa chain V region 120 (108 aa).

Residues 1-23 (AFELTQTPSSVEAAVGGTVTIKC) form a framework-1 region. A complementarity-determining-1 region spans residues 24–34 (QSSQSIGTYLA). The tract at residues 35–49 (WYZZKPGQPPKLLIY) is framework-2. The tract at residues 50 to 56 (RASTLAS) is complementarity-determining-2. The framework-3 stretch occupies residues 57–88 (GVSSRFKGSGSGTEFTLTISGVECADAATYYC). Residues 89-97 (QGTYYZSAS) are complementarity-determining-3. The tract at residues 98 to 107 (FGGGTEVVVK) is framework-4.

This is Ig kappa chain V region 120 from Oryctolagus cuniculus (Rabbit).